We begin with the raw amino-acid sequence, 409 residues long: Ubiquitin-associated domain-containing protein 1 (409 aa).

M1 carries the N-acetylmethionine modification. The 85-residue stretch at 14–98 folds into the Ubiquitin-like domain; that stretch reads LRLHICAADG…LLLIKKRVPS (85 aa). The interval 101-122 is disordered; that stretch reads PKMADVSAEEKKKQEQKAPDKD. A compositionally biased stretch (basic and acidic residues) spans 108 to 122; sequence AEEKKKQEQKAPDKD. The 45-residue stretch at 187–231 folds into the UBA 1 domain; it reads DEDERVDETALRQLTEMGFPESRASKALRLNHMSVPQAMEWLIEH. Residues 239-273 are disordered; the sequence is TPLPGHAAQAGASAAATTSSTSSEAAVGTSVEDEE. Over residues 245 to 268 the composition is skewed to low complexity; the sequence is AAQAGASAAATTSSTSSEAAVGTS. The UBA 2 domain maps to 292 to 332; that stretch reads RADARAVISLMEMGFDEKEVIDALRVNNNQQNAACEWLLGD. Residues 357–396 enclose the STI1 domain; it reads NPVVQLGLTNPKTLLAFEDMLENPLNSTQWMNDPETGPVM.

As to quaternary structure, component of the KPC complex composed of RNF123/KPC1 and UBAC1/KPC2. Interacts (via ubiquitin-like domain) with RNF123. Interacts (via ubiquitin-like and UBA domains) with the proteasome via its N-terminal domain.

The protein resides in the cytoplasm. It participates in protein modification; protein ubiquitination. Non-catalytic component of the KPC complex, a E3 ubiquitin-protein ligase complex that mediates polyubiquitination of target proteins, such as CDKN1B and NFKB1. The KPC complex catalyzes polyubiquitination and proteasome-mediated degradation of CDKN1B during G1 phase of the cell cycle. The KPC complex also acts as a key regulator of the NF-kappa-B signaling by promoting maturation of the NFKB1 component of NF-kappa-B by catalyzing ubiquitination of the NFKB1 p105 precursor. Within the KPC complex, UBAC1 acts as an adapter that promotes the transfer of target proteins that have been polyubiquitinated by RNF123/KPC1 to the 26S proteasome. This is Ubiquitin-associated domain-containing protein 1 (Ubac1) from Mus musculus (Mouse).